The chain runs to 144 residues: Large ribosomal subunit protein uL16 (144 aa).

Belongs to the universal ribosomal protein uL16 family. As to quaternary structure, part of the 50S ribosomal subunit.

Binds 23S rRNA and is also seen to make contacts with the A and possibly P site tRNAs. This chain is Large ribosomal subunit protein uL16, found in Clostridium perfringens (strain ATCC 13124 / DSM 756 / JCM 1290 / NCIMB 6125 / NCTC 8237 / Type A).